A 553-amino-acid polypeptide reads, in one-letter code: MKFLQIIKHLKLQNKKNALDNFVNCRTYEHISNINKLFLNNFSSTKEHSEHGQVKHENFLNSTLKYEENSQNGSTNNLKNGKYNMYVSEGNVNINEEKYKDNNISSNNTQYNNNSSNSGSLNDEGPLWKEHIDDVVNENKKKKMNRFYLDSQATTMIDPRVLDKMLPYMTYIYGNAHSRNHFFGWESEKAVEDARTNLLNLINGKNNKEIIFTSGATESNNLALIGICTYYNKLNKQKNHIITSQIEHKCILQTCRFLQTKGFEVTYLKPDTNGLVKLDDIKNSIKDNTIMASFIFVNNEIGVIQDIENIGNLCKEKNILFHTDASQAAGKVPIDVQKMNIDLMSMSGHKLYGPKGIGALYIKRKKPNIRLNALIHGGGQERGLRSGTLPTHLIVGFGEAAKVCSLEMNRDEKKVRYFFNYVKDYLTKHLDYIVFNGCQINRYYGNMNISFLFVEGESLLMSLNEIALSSGSACTSSTLEPSYVLRSIGISEDIAHTSIRIGFNRFTTFFEVQQLCINLVKSVERLRSISPLYEMELEKKNPSNDDIPKFIWT.

Residues 102–122 (NNISSNNTQYNNNSSNSGSLN) show a composition bias toward low complexity. Residues 102–125 (NNISSNNTQYNNNSSNSGSLNDEG) are disordered.

The protein belongs to the class-V pyridoxal-phosphate-dependent aminotransferase family. NifS/IscS subfamily. As to quaternary structure, homotetramer. Interacts with Isd11; the interaction enhances cysteine desulfurase activity of IscS. Interacts with IscU. Component of a complex, at least composed of IscS, Isd11 and IscU. It depends on pyridoxal 5'-phosphate as a cofactor.

It localises to the mitochondrion. The catalysed reaction is (sulfur carrier)-H + L-cysteine = (sulfur carrier)-SH + L-alanine. The protein operates within cofactor biosynthesis; iron-sulfur cluster biosynthesis. Its function is as follows. Catalyzes sulfur activation and mobilization in iron-sulfur cluster formation (ISC) pathway for iron-sulfur (Fe-S) cluster biogenesis. Active when in complex with a partner protein Isd11. This is Cysteine desulfurase IscS from Plasmodium falciparum (isolate 3D7).